A 444-amino-acid chain; its full sequence is uncharacterized protein (444 aa).

14 helical membrane-spanning segments follow: residues 9–29 (LIVS…MIAV), 42–62 (IASI…TQPI), 82–102 (LFLI…LIVF), 104–126 (ALQA…HVVS), 136–156 (FFGL…SILI), 164–184 (IFWV…TMFP), 193–213 (APLD…IILL), 217–237 (EAPW…PLFF), 263–283 (LSVL…PLFM), 295–315 (GMAL…GAQL), 324–344 (IIFL…LLSS), 347–367 (SVLF…VGLT), 387–407 (GIFS…IGLI), and 411–431 (HTLF…SLGI).

The protein belongs to the major facilitator superfamily. TCR/Tet family.

Its subcellular location is the cell membrane. This is an uncharacterized protein from Bacillus subtilis (strain 168).